The chain runs to 344 residues: MDFAISLPDPGLTAAIQHRIDRKTKPLGALGRIEALALQLGLIQQTAAPRIRQPHVLVFAGDHGAARAGISAFPQDVTWQMVENFLAGGAAVNVFCRQTELALTVIDSGVNHDFGRRDGLVDAKIAPGTANYIETPAMSAQQRDAALARGRELAHALAVNGCNLVGFGEMGIGNTASASLLTHCLTGIDLATVTGRGTGLDDAGLARKHRLLAQALARGGRPSDPLGALAEYGGFEIAMMAGAMLGAAEKRMTLLIDGFIVTSALLVAQAIAPAILPYCVFAHRSKEPGHTAQLAHLRVEPLMELDLRLGEGTGAALAFPLVQAAANFLNDMASFDSAGVDDRV.

Residue E311 is the Proton acceptor of the active site.

Belongs to the CobT family.

It carries out the reaction 5,6-dimethylbenzimidazole + nicotinate beta-D-ribonucleotide = alpha-ribazole 5'-phosphate + nicotinate + H(+). It functions in the pathway nucleoside biosynthesis; alpha-ribazole biosynthesis; alpha-ribazole from 5,6-dimethylbenzimidazole: step 1/2. Catalyzes the synthesis of alpha-ribazole-5'-phosphate from nicotinate mononucleotide (NAMN) and 5,6-dimethylbenzimidazole (DMB). The polypeptide is Nicotinate-nucleotide--dimethylbenzimidazole phosphoribosyltransferase (Aromatoleum aromaticum (strain DSM 19018 / LMG 30748 / EbN1) (Azoarcus sp. (strain EbN1))).